The chain runs to 181 residues: UPF0398 protein lin2003 (181 aa).

The protein belongs to the UPF0398 family.

The protein is UPF0398 protein lin2003 of Listeria innocua serovar 6a (strain ATCC BAA-680 / CLIP 11262).